Here is a 201-residue protein sequence, read N- to C-terminus: L(+)-tartrate dehydratase subunit beta (201 aa).

The active site involves His37.

The protein belongs to the class-I fumarase family. Heterotetramer of two alpha and two beta subunits.

It carries out the reaction (2R,3R)-tartrate = oxaloacetate + H2O. In Escherichia coli O6:K15:H31 (strain 536 / UPEC), this protein is L(+)-tartrate dehydratase subunit beta (ttdB).